Reading from the N-terminus, the 305-residue chain is Ribosomal RNA small subunit methyltransferase H (305 aa).

Residues 49-51 (GGH), D68, F100, D116, and Q123 each bind S-adenosyl-L-methionine.

This sequence belongs to the methyltransferase superfamily. RsmH family.

The protein localises to the cytoplasm. It carries out the reaction cytidine(1402) in 16S rRNA + S-adenosyl-L-methionine = N(4)-methylcytidine(1402) in 16S rRNA + S-adenosyl-L-homocysteine + H(+). In terms of biological role, specifically methylates the N4 position of cytidine in position 1402 (C1402) of 16S rRNA. This is Ribosomal RNA small subunit methyltransferase H from Synechocystis sp. (strain ATCC 27184 / PCC 6803 / Kazusa).